The following is a 202-amino-acid chain: Probable GTP-binding protein EngB (202 aa).

An EngB-type G domain is found at 26–200 (VSKEIAFTGS…KAQLDSWFSI (175 aa)). Residues 34-41 (GSSNVGKS), 61-65 (GSTKT), 79-82 (DLPG), 146-149 (NKAD), and 179-181 (FSS) contribute to the GTP site. Mg(2+) is bound by residues S41 and T63.

This sequence belongs to the TRAFAC class TrmE-Era-EngA-EngB-Septin-like GTPase superfamily. EngB GTPase family. It depends on Mg(2+) as a cofactor.

Functionally, necessary for normal cell division and for the maintenance of normal septation. This is Probable GTP-binding protein EngB from Baumannia cicadellinicola subsp. Homalodisca coagulata.